The sequence spans 733 residues: Fibronectin type III domain-containing protein 7 (733 aa).

Positions 1-25 (MAGGRETCLPLIGFILICLKMVASA) are cleaved as a signal peptide. Fibronectin type-III domains lie at 28–115 (APEI…TVLA), 116–202 (APIL…TSPR), 203–288 (APAN…TVAC), 289–373 (APGR…TAPC), 374–459 (CPSD…TAPC), 460–544 (SPEI…TVPC), 545–632 (CPTG…CCPL), and 631–715 (PLGV…YSVT). N-linked (GlcNAc...) asparagine glycosylation is present at N230. N433 carries N-linked (GlcNAc...) asparagine glycosylation.

The protein resides in the secreted. The protein is Fibronectin type III domain-containing protein 7 (FNDC7) of Homo sapiens (Human).